The sequence spans 98 residues: NADH-ubiquinone oxidoreductase chain 4L (98 aa).

The next 3 membrane-spanning stretches (helical) occupy residues 2 to 22 (PSIS…MLMF), 29 to 49 (SLLC…LIIL), and 61 to 81 (ILLL…LVMV).

This sequence belongs to the complex I subunit 4L family. As to quaternary structure, core subunit of respiratory chain NADH dehydrogenase (Complex I) which is composed of 45 different subunits.

It localises to the mitochondrion inner membrane. The enzyme catalyses a ubiquinone + NADH + 5 H(+)(in) = a ubiquinol + NAD(+) + 4 H(+)(out). In terms of biological role, core subunit of the mitochondrial membrane respiratory chain NADH dehydrogenase (Complex I) which catalyzes electron transfer from NADH through the respiratory chain, using ubiquinone as an electron acceptor. Part of the enzyme membrane arm which is embedded in the lipid bilayer and involved in proton translocation. The chain is NADH-ubiquinone oxidoreductase chain 4L (MT-ND4L) from Microcebus griseorufus (Gray-brown mouse lemur).